The sequence spans 278 residues: Release factor glutamine methyltransferase (278 aa).

S-adenosyl-L-methionine contacts are provided by residues 117-121 (GTGSG), Asp-140, and Asn-184. 184 to 187 (NPPY) provides a ligand contact to substrate.

This sequence belongs to the protein N5-glutamine methyltransferase family. PrmC subfamily.

It carries out the reaction L-glutaminyl-[peptide chain release factor] + S-adenosyl-L-methionine = N(5)-methyl-L-glutaminyl-[peptide chain release factor] + S-adenosyl-L-homocysteine + H(+). Its function is as follows. Methylates the class 1 translation termination release factors RF1/PrfA and RF2/PrfB on the glutamine residue of the universally conserved GGQ motif. This chain is Release factor glutamine methyltransferase, found in Bacteroides thetaiotaomicron (strain ATCC 29148 / DSM 2079 / JCM 5827 / CCUG 10774 / NCTC 10582 / VPI-5482 / E50).